Here is a 1017-residue protein sequence, read N- to C-terminus: Semaphorin-6D (1017 aa).

Positions 1 to 20 (MRVFLLCAYILLLMISQLRA) are cleaved as a signal peptide. Over 21–606 (VSFPEDDEPL…GESNQMVHMN (586 aa)) the chain is Extracellular. In terms of domain architecture, Sema spans 27–512 (DEPLNTVDYH…FSSCVIRIPL (486 aa)). A glycan (N-linked (GlcNAc...) asparagine) is linked at Asn51. Intrachain disulfides connect Cys108–Cys118, Cys136–Cys145, Cys259–Cys370, and Cys284–Cys329. Asn283 carries an N-linked (GlcNAc...) asparagine glycan. 2 N-linked (GlcNAc...) asparagine glycosylation sites follow: Asn435 and Asn461. Cystine bridges form between Cys477/Cys506, Cys515/Cys533, Cys521/Cys568, and Cys525/Cys541. Positions 514–569 (RCERYGSCKKSCIASRDPYCGWLSQGSCGRVTPGMLAEGYEQDAEFGNTAHLGDCH) constitute a PSI domain. A helical transmembrane segment spans residues 607-627 (VLITCVFAAFVLGAFIAGVAV). Over 628–1017 (YCYRDMFVRK…SVRPLNKYTY (390 aa)) the chain is Cytoplasmic. Phosphoserine occurs at positions 667, 678, and 688. Disordered regions lie at residues 688 to 719 (SRKE…PTPE), 731 to 769 (AMKS…GHIP), 783 to 818 (TSFS…RSVD), and 873 to 912 (LYSP…HKNS). Position 717 is a phosphothreonine (Thr717). A compositionally biased stretch (basic and acidic residues) spans 734–749 (SHSEKAHGHGASRKET). Ser875, Ser901, and Ser927 each carry phosphoserine. Residues 875 to 886 (SPPSTLPRNSPT) show a composition bias toward polar residues. Polar residues predominate over residues 965 to 981 (LQPSLSRQSSYTSNGTL). The disordered stretch occupies residues 965–1017 (LQPSLSRQSSYTSNGTLPRTGLKRTPSLKPDVPPKPSFVPQTPSVRPLNKYTY).

It belongs to the semaphorin family.

The protein resides in the cell membrane. Functionally, shows growth cone collapsing activity on dorsal root ganglion (DRG) neurons in vitro. May be a stop signal for the DRG neurons in their target areas, and possibly also for other neurons. May also be involved in the maintenance and remodeling of neuronal connections. Ligand of TREM2 with PLXNA1 as coreceptor in dendritic cells, plays a role in the generation of immune responses and skeletal homeostasis. The protein is Semaphorin-6D (SEMA6D) of Pongo abelii (Sumatran orangutan).